We begin with the raw amino-acid sequence, 446 residues long: WD repeat domain phosphoinositide-interacting protein 1 (446 aa).

WD repeat units follow at residues 3-42, 47-88, 92-126, 131-173, 177-216, 222-261, and 304-343; these read AEAADAPPGGVESALSCFSFNQDCTSLATGTKAGYKLFSL, QLDQ…VYHF, TEICNYSYSSNILSIRLNRQRLLVCLEESIYIHNI, LLKT…LYDG, KTVCTIAAHEGTLAAITFNASGSKLASASEKGTVIRVFSV, LYEFRRGMKRYVTISSLVFSMDSQFLCASSNTETVHIFKL, and FATARLNFSGQRNICTLSTIQKLPRLLVASSSGHLYMYNL. The Nuclear receptor interaction motif lies at 131 to 136; sequence LLKTLL. Positions 225 to 228 match the L/FRRG motif motif; that stretch reads FRRG. The disordered stretch occupies residues 386–406; the sequence is ARPSASSASTVPGYSEDGGAL.

Belongs to the WD repeat PROPPIN family. As to quaternary structure, interacts with androgen receptor (AR) and the estrogen receptors ESR1 and ESR2. Interacts with WIPI2. Interacts with WDR45. Interacts with ATG16L1. May interact with NUDC. Ubiquitously expressed. Highly expressed in skeletal muscle, heart, testis, pancreas and placenta. Highly expressed in G361, Sk-mel-28, Sk-mel-13, WM852 and WM451 cells. Up-regulated in a variety of tumor tissues.

The protein localises to the golgi apparatus. Its subcellular location is the trans-Golgi network. It localises to the endosome. The protein resides in the cytoplasmic vesicle. It is found in the clathrin-coated vesicle. The protein localises to the preautophagosomal structure membrane. Its subcellular location is the cytoplasm. It localises to the cytoskeleton. In terms of biological role, component of the autophagy machinery that controls the major intracellular degradation process by which cytoplasmic materials are packaged into autophagosomes and delivered to lysosomes for degradation. Plays an important role in starvation- and calcium-mediated autophagy, as well as in mitophagy. Functions downstream of the ULK1 and PI3-kinases that produce phosphatidylinositol 3-phosphate (PtdIns3P) on membranes of the endoplasmic reticulum once activated. Binds phosphatidylinositol 3-phosphate (PtdIns3P), and maybe other phosphoinositides including PtdIns3,5P2 and PtdIns5P, and is recruited to phagophore assembly sites at the endoplasmic reticulum membranes. There, it assists WIPI2 in the recruitment of ATG12-ATG5-ATG16L1, a complex that directly controls the elongation of the nascent autophagosomal membrane. Together with WDR45/WIPI4, promotes ATG2 (ATG2A or ATG2B)-mediated lipid transfer by enhancing ATG2-association with phosphatidylinositol 3-monophosphate (PI3P)-containing membranes. Involved in xenophagy of Staphylococcus aureus. Invading S.aureus cells become entrapped in autophagosome-like WIPI1 positive vesicles targeted for lysosomal degradation. Also plays a distinct role in controlling the transcription of melanogenic enzymes and melanosome maturation, a process that is distinct from starvation-induced autophagy. May also regulate the trafficking of proteins involved in the mannose-6-phosphate receptor (MPR) recycling pathway. In Homo sapiens (Human), this protein is WD repeat domain phosphoinositide-interacting protein 1 (WIPI1).